The sequence spans 472 residues: Serine/threonine-protein kinase ULK3 (472 aa).

Residues 14-270 enclose the Protein kinase domain; that stretch reads FILTERLGSG…FQDFFAHPWV (257 aa). ATP is bound by residues 20–28 and Lys-44; that span reads LGSGTYATV. The active-site Proton acceptor is Asp-137. Ser-176 is subject to Phosphoserine. The MIT 1 domain maps to 281–347; it reads LAQATALVVE…VSRAEELKAI (67 aa). Phosphoserine; by autocatalysis occurs at positions 350 and 384. Residues 376–444 enclose the MIT 2 domain; the sequence is LLAALEVASA…ARAEYLKEQI (69 aa). Ser-464 carries the post-translational modification Phosphoserine.

It belongs to the protein kinase superfamily. Ser/Thr protein kinase family. APG1/unc-51/ULK1 subfamily. Interacts (via protein kinase domain) with SUFU. Post-translationally, autophosphorylated. Autophosphorylation is blocked by interaction with SUFU.

It localises to the cytoplasm. The enzyme catalyses L-seryl-[protein] + ATP = O-phospho-L-seryl-[protein] + ADP + H(+). It carries out the reaction L-threonyl-[protein] + ATP = O-phospho-L-threonyl-[protein] + ADP + H(+). Serine/threonine protein kinase that acts as a regulator of Sonic hedgehog (SHH) signaling and autophagy. Acts as a negative regulator of SHH signaling in the absence of SHH ligand: interacts with SUFU, thereby inactivating the protein kinase activity and preventing phosphorylation of GLI proteins (GLI1, GLI2 and/or GLI3). Positively regulates SHH signaling in the presence of SHH: dissociates from SUFU, autophosphorylates and mediates phosphorylation of GLI2, activating it and promoting its nuclear translocation. Phosphorylates in vitro GLI2, as well as GLI1 and GLI3, although less efficiently. Also acts as a regulator of autophagy: following cellular senescence, able to induce autophagy. This is Serine/threonine-protein kinase ULK3 (Ulk3) from Rattus norvegicus (Rat).